Here is a 205-residue protein sequence, read N- to C-terminus: Large ribosomal subunit protein bL25 (205 aa).

Residues 184–205 (QPAGAVSEAAEGGEAAGETPAA) form a disordered region. The span at 186–205 (AGAVSEAAEGGEAAGETPAA) shows a compositional bias: low complexity.

Belongs to the bacterial ribosomal protein bL25 family. CTC subfamily. Part of the 50S ribosomal subunit; part of the 5S rRNA/L5/L18/L25 subcomplex. Contacts the 5S rRNA. Binds to the 5S rRNA independently of L5 and L18.

In terms of biological role, this is one of the proteins that binds to the 5S RNA in the ribosome where it forms part of the central protuberance. The polypeptide is Large ribosomal subunit protein bL25 (Cupriavidus necator (strain ATCC 17699 / DSM 428 / KCTC 22496 / NCIMB 10442 / H16 / Stanier 337) (Ralstonia eutropha)).